A 126-amino-acid chain; its full sequence is Glycine cleavage system H protein (126 aa).

The 83-residue stretch at 22–104 folds into the Lipoyl-binding domain; sequence VVFIGITDYA…YGAGWIIKVK (83 aa). Lys-63 bears the N6-lipoyllysine mark.

Belongs to the GcvH family. In terms of assembly, the glycine cleavage system is composed of four proteins: P, T, L and H. (R)-lipoate is required as a cofactor.

Functionally, the glycine cleavage system catalyzes the degradation of glycine. The H protein shuttles the methylamine group of glycine from the P protein to the T protein. The sequence is that of Glycine cleavage system H protein from Porphyromonas gingivalis (strain ATCC 33277 / DSM 20709 / CIP 103683 / JCM 12257 / NCTC 11834 / 2561).